A 311-amino-acid polypeptide reads, in one-letter code: Tyrosine recombinase XerC (311 aa).

The Core-binding (CB) domain maps to 11–97 (DALAQPLERF…SLRSFLDFLI (87 aa)). The Tyr recombinase domain occupies 118–298 (TLPKNLDVDE…DFQHLAQVYD (181 aa)). Catalysis depends on residues Arg-157, Lys-181, His-250, Arg-253, and His-276. Tyr-285 (O-(3'-phospho-DNA)-tyrosine intermediate) is an active-site residue.

This sequence belongs to the 'phage' integrase family. XerC subfamily. As to quaternary structure, forms a cyclic heterotetrameric complex composed of two molecules of XerC and two molecules of XerD.

The protein localises to the cytoplasm. Functionally, site-specific tyrosine recombinase, which acts by catalyzing the cutting and rejoining of the recombining DNA molecules. The XerC-XerD complex is essential to convert dimers of the bacterial chromosome into monomers to permit their segregation at cell division. It also contributes to the segregational stability of plasmids. This is Tyrosine recombinase XerC from Vibrio cholerae serotype O1 (strain ATCC 39541 / Classical Ogawa 395 / O395).